The chain runs to 150 residues: Cytochrome c oxidase subunit 5A, mitochondrial (150 aa).

The transit peptide at 1-41 (MLGAALRRCAVAATTRAGPRGLLHSARTPGPAAAIQSVRCX) directs the protein to the mitochondrion. Residues 2-17 (LGAALRRCAVAATTRA) carry the SIFI-degron motif. K87 and K113 each carry N6-acetyllysine. Residue T141 is modified to Phosphothreonine.

The protein belongs to the cytochrome c oxidase subunit 5A family. Component of the cytochrome c oxidase (complex IV, CIV), a multisubunit enzyme composed of 14 subunits. The complex is composed of a catalytic core of 3 subunits MT-CO1, MT-CO2 and MT-CO3, encoded in the mitochondrial DNA, and 11 supernumerary subunits COX4I, COX5A, COX5B, COX6A, COX6B, COX6C, COX7A, COX7B, COX7C, COX8 and NDUFA4, which are encoded in the nuclear genome. The complex exists as a monomer or a dimer and forms supercomplexes (SCs) in the inner mitochondrial membrane with NADH-ubiquinone oxidoreductase (complex I, CI) and ubiquinol-cytochrome c oxidoreductase (cytochrome b-c1 complex, complex III, CIII), resulting in different assemblies (supercomplex SCI(1)III(2)IV(1) and megacomplex MCI(2)III(2)IV(2)). Interacts with AFG1L. Interacts with RAB5IF. In response to mitochondrial stress, the precursor protein is ubiquitinated by the SIFI complex in the cytoplasm before mitochondrial import, leading to its degradation. Within the SIFI complex, UBR4 initiates ubiquitin chain that are further elongated or branched by KCMF1.

The protein localises to the mitochondrion inner membrane. Its pathway is energy metabolism; oxidative phosphorylation. Its function is as follows. Component of the cytochrome c oxidase, the last enzyme in the mitochondrial electron transport chain which drives oxidative phosphorylation. The respiratory chain contains 3 multisubunit complexes succinate dehydrogenase (complex II, CII), ubiquinol-cytochrome c oxidoreductase (cytochrome b-c1 complex, complex III, CIII) and cytochrome c oxidase (complex IV, CIV), that cooperate to transfer electrons derived from NADH and succinate to molecular oxygen, creating an electrochemical gradient over the inner membrane that drives transmembrane transport and the ATP synthase. Cytochrome c oxidase is the component of the respiratory chain that catalyzes the reduction of oxygen to water. Electrons originating from reduced cytochrome c in the intermembrane space (IMS) are transferred via the dinuclear copper A center (CU(A)) of subunit 2 and heme A of subunit 1 to the active site in subunit 1, a binuclear center (BNC) formed by heme A3 and copper B (CU(B)). The BNC reduces molecular oxygen to 2 water molecules using 4 electrons from cytochrome c in the IMS and 4 protons from the mitochondrial matrix. This Pan paniscus (Pygmy chimpanzee) protein is Cytochrome c oxidase subunit 5A, mitochondrial (COX5A).